Reading from the N-terminus, the 311-residue chain is tRNA(Ile)-lysidine synthase (311 aa).

32–37 (SGGPDS) contacts ATP.

It belongs to the tRNA(Ile)-lysidine synthase family.

Its subcellular location is the cytoplasm. It catalyses the reaction cytidine(34) in tRNA(Ile2) + L-lysine + ATP = lysidine(34) in tRNA(Ile2) + AMP + diphosphate + H(+). In terms of biological role, ligates lysine onto the cytidine present at position 34 of the AUA codon-specific tRNA(Ile) that contains the anticodon CAU, in an ATP-dependent manner. Cytidine is converted to lysidine, thus changing the amino acid specificity of the tRNA from methionine to isoleucine. This Cutibacterium acnes (strain DSM 16379 / KPA171202) (Propionibacterium acnes) protein is tRNA(Ile)-lysidine synthase.